The primary structure comprises 123 residues: Large ribosomal subunit protein uL14 (123 aa).

It belongs to the universal ribosomal protein uL14 family. As to quaternary structure, part of the 50S ribosomal subunit. Forms a cluster with proteins L3 and L19. In the 70S ribosome, L14 and L19 interact and together make contacts with the 16S rRNA in bridges B5 and B8.

Functionally, binds to 23S rRNA. Forms part of two intersubunit bridges in the 70S ribosome. The sequence is that of Large ribosomal subunit protein uL14 from Photorhabdus laumondii subsp. laumondii (strain DSM 15139 / CIP 105565 / TT01) (Photorhabdus luminescens subsp. laumondii).